The following is a 205-amino-acid chain: CASP-like protein 3A1 (205 aa).

Topologically, residues 1 to 39 (MGIGMDSSTMSGPLVAHSGILDGDYEKRPAVCKMQMRFD) are cytoplasmic. A helical membrane pass occupies residues 40–60 (LANVGLRVLSLACSLVALVSM). Over 61-89 (ASNQESGVVTVFGFKLPVYSKWSYSDSFE) the chain is Extracellular. The helical transmembrane segment at 90-110 (FLVGASAAAAAHSLLQLLLCG) threads the bilayer. The Cytoplasmic portion of the chain corresponds to 111–125 (MKMVKRASTIPSRNH). Residues 126–146 (AWLLFAGDQVFAYGMLAAASA) traverse the membrane as a helical segment. Over 147 to 176 (AAGVTNLNRTGFRHSDLPNFCKPLHRFCDK) the chain is Extracellular. Asn-154 is a glycosylation site (N-linked (GlcNAc...) asparagine). The chain crosses the membrane as a helical span at residues 177–197 (AAISIVFAFISSLILGGSAVL). The Cytoplasmic portion of the chain corresponds to 198 to 205 (DVFWLSKN).

The protein belongs to the Casparian strip membrane proteins (CASP) family. Homodimer and heterodimers.

It localises to the cell membrane. The chain is CASP-like protein 3A1 from Picea sitchensis (Sitka spruce).